We begin with the raw amino-acid sequence, 403 residues long: Poly(rC)-binding protein 4 (403 aa).

KH domains follow at residues 17-67 (TLTL…TITG), 101-154 (PVTL…TVSG), and 241-293 (TSSQ…TITG).

It is found in the cytoplasm. Its function is as follows. Single-stranded nucleic acid binding protein that binds preferentially to oligo dC. This Homo sapiens (Human) protein is Poly(rC)-binding protein 4 (PCBP4).